The following is a 978-amino-acid chain: Macrophage colony-stimulating factor 1 receptor (978 aa).

Residues 1-19 (MELGPPLVLLLATVWHGQG) form the signal peptide. The Extracellular segment spans residues 20–515 (APVIEPSGPE…QLPDESLFTP (496 aa)). Ig-like C2-type domains follow at residues 24 to 104 (EPSG…VKDP), 107 to 197 (SWNL…KVNR), 204 to 298 (QIKL…VVES), 299 to 397 (AYLN…LTLR), and 398 to 503 (YPPE…SLGQ). Cystine bridges form between cysteine 42/cysteine 84, cysteine 127/cysteine 177, and cysteine 224/cysteine 278. 2 N-linked (GlcNAc...) asparagine glycosylation sites follow: asparagine 45 and asparagine 73. Residues asparagine 302, asparagine 335, asparagine 389, asparagine 410, asparagine 449, asparagine 478, and asparagine 491 are each glycosylated (N-linked (GlcNAc...) asparagine). A disulfide bridge connects residues cysteine 417 and cysteine 483. The helical transmembrane segment at 516–536 (VVVACMSVMSLLVLLLLLLLY) threads the bilayer. Over 537 to 978 (KYKQKPKYQV…LQPNNYQFAC (442 aa)) the chain is Cytoplasmic. Positions 540 to 572 (QKPKYQVRWKIIERYEGNSYTFIDPTQLPYNEK) are regulatory juxtamembrane domain. 2 positions are modified to phosphotyrosine; by autocatalysis: tyrosine 544 and tyrosine 559. The region spanning 580-914 (LQFGKTLGAG…CFLLQEQARL (335 aa)) is the Protein kinase domain. Residues 586-594 (LGAGAFGKV) and lysine 614 each bind ATP. Phosphotyrosine; by autocatalysis occurs at positions 697 and 706. Serine 711 bears the Phosphoserine mark. Tyrosine 721 bears the Phosphotyrosine; by autocatalysis mark. Aspartate 776 functions as the Proton acceptor in the catalytic mechanism. The interval 794–816 (DFGLARDIMNDSNYVVKGNARLP) is activation loop. Phosphotyrosine; by autocatalysis is present on residues tyrosine 807 and tyrosine 921. The tract at residues 921–957 (YANLPSSGGSSGSDSGGGSSGGSSSEPEEESSSEHLA) is disordered. Positions 929-941 (GSSGSDSGGGSSG) are enriched in gly residues. Phosphotyrosine; by autocatalysis is present on tyrosine 974.

Belongs to the protein kinase superfamily. Tyr protein kinase family. CSF-1/PDGF receptor subfamily. As to quaternary structure, monomer. Homodimer. Interacts with CSF1 and IL34. Interaction with dimeric CSF1 or IL34 leads to receptor homodimerization. Interacts with INPPL1/SHIP2 and THOC5. Interacts (tyrosine phosphorylated) with PLCG2 (via SH2 domain). Interacts (tyrosine phosphorylated) with PIK3R1 (via SH2 domain). Interacts (tyrosine phosphorylated) with FYN, YES1 and SRC (via SH2 domain). Interacts (tyrosine phosphorylated) with CBL, GRB2 and SLA2. In terms of processing, autophosphorylated in response to CSF1 or IL34 binding. Phosphorylation at Tyr-559 is important for normal down-regulation of signaling by ubiquitination, internalization and degradation. Phosphorylation at Tyr-559 and Tyr-807 is important for interaction with SRC family members, including FYN, YES1 and SRC, and for subsequent activation of these protein kinases. Phosphorylation at Tyr-697 and Tyr-921 is important for interaction with GRB2. Phosphorylation at Tyr-721 is important for interaction with PIK3R1. Phosphorylation at Tyr-721 and Tyr-807 is important for interaction with PLCG2. Phosphorylation at Tyr-974 is important for interaction with CBL. Dephosphorylation by PTPN2 negatively regulates downstream signaling and macrophage differentiation. Ubiquitinated. Becomes rapidly polyubiquitinated after autophosphorylation, leading to its degradation.

The protein resides in the cell membrane. It carries out the reaction L-tyrosyl-[protein] + ATP = O-phospho-L-tyrosyl-[protein] + ADP + H(+). Its activity is regulated as follows. Present in an inactive conformation in the absence of bound ligand. CSF1 or IL34 binding leads to dimerization and activation by autophosphorylation on tyrosine residues. In terms of biological role, tyrosine-protein kinase that acts as a cell-surface receptor for CSF1 and IL34 and plays an essential role in the regulation of survival, proliferation and differentiation of hematopoietic precursor cells, especially mononuclear phagocytes, such as macrophages and monocytes. Promotes the release of pro-inflammatory chemokines in response to IL34 and CSF1, and thereby plays an important role in innate immunity and in inflammatory processes. Plays an important role in the regulation of osteoclast proliferation and differentiation, the regulation of bone resorption, and is required for normal bone and tooth development. Required for normal male and female fertility, and for normal development of milk ducts and acinar structures in the mammary gland during pregnancy. Promotes reorganization of the actin cytoskeleton, regulates formation of membrane ruffles, cell adhesion and cell migration, and promotes cancer cell invasion. Activates several signaling pathways in response to ligand binding, including the ERK1/2 and the JNK pathway. Phosphorylates PIK3R1, PLCG2, GRB2, SLA2 and CBL. Activation of PLCG2 leads to the production of the cellular signaling molecules diacylglycerol and inositol 1,4,5-trisphosphate, that then lead to the activation of protein kinase C family members, especially PRKCD. Phosphorylation of PIK3R1, the regulatory subunit of phosphatidylinositol 3-kinase, leads to activation of the AKT1 signaling pathway. Activated CSF1R also mediates activation of the MAP kinases MAPK1/ERK2 and/or MAPK3/ERK1, and of the SRC family kinases SRC, FYN and YES1. Activated CSF1R transmits signals both via proteins that directly interact with phosphorylated tyrosine residues in its intracellular domain, or via adapter proteins, such as GRB2. Promotes activation of STAT family members STAT3, STAT5A and/or STAT5B. Promotes tyrosine phosphorylation of SHC1 and INPP5D/SHIP-1. Receptor signaling is down-regulated by protein phosphatases, such as INPP5D/SHIP-1, that dephosphorylate the receptor and its downstream effectors, and by rapid internalization of the activated receptor. In the central nervous system, may play a role in the development of microglia macrophages. The chain is Macrophage colony-stimulating factor 1 receptor (Csf1r) from Rattus norvegicus (Rat).